The following is a 362-amino-acid chain: Sulfate/thiosulfate import ATP-binding protein CysA (362 aa).

The ABC transporter domain maps to 3-237 (IEIHDLSKQF…PANPFVYEFL (235 aa)). 35–42 (GPSGSGKT) lines the ATP pocket.

It belongs to the ABC transporter superfamily. Sulfate/tungstate importer (TC 3.A.1.6) family. In terms of assembly, the complex is composed of two ATP-binding proteins (CysA), two transmembrane proteins (CysT and CysW) and a solute-binding protein (CysP).

The protein resides in the cell inner membrane. The enzyme catalyses sulfate(out) + ATP + H2O = sulfate(in) + ADP + phosphate + H(+). It catalyses the reaction thiosulfate(out) + ATP + H2O = thiosulfate(in) + ADP + phosphate + H(+). Functionally, part of the ABC transporter complex CysAWTP involved in sulfate/thiosulfate import. Responsible for energy coupling to the transport system. The sequence is that of Sulfate/thiosulfate import ATP-binding protein CysA from Nitrosomonas europaea (strain ATCC 19718 / CIP 103999 / KCTC 2705 / NBRC 14298).